The chain runs to 230 residues: Increased recombination centers protein 19 (230 aa).

The protein belongs to the IRC19 family.

In terms of biological role, involved in sporulation and maintenance of the mitochondrial DNA. Is probably involved in a pathway contributing to genomic integrity. The polypeptide is Increased recombination centers protein 19 (IRC19) (Saccharomyces cerevisiae (strain ATCC 204508 / S288c) (Baker's yeast)).